Consider the following 354-residue polypeptide: Uroporphyrinogen decarboxylase (354 aa).

Substrate contacts are provided by residues 27-31 (RQAGR), aspartate 77, tyrosine 154, serine 209, and histidine 327.

Belongs to the uroporphyrinogen decarboxylase family. Homodimer.

It localises to the cytoplasm. The enzyme catalyses uroporphyrinogen III + 4 H(+) = coproporphyrinogen III + 4 CO2. It participates in porphyrin-containing compound metabolism; protoporphyrin-IX biosynthesis; coproporphyrinogen-III from 5-aminolevulinate: step 4/4. Functionally, catalyzes the decarboxylation of four acetate groups of uroporphyrinogen-III to yield coproporphyrinogen-III. The protein is Uroporphyrinogen decarboxylase of Shewanella putrefaciens (strain CN-32 / ATCC BAA-453).